The primary structure comprises 108 residues: Putative septation protein SpoVG (108 aa).

It belongs to the SpoVG family.

Could be involved in septation. The polypeptide is Putative septation protein SpoVG (Bdellovibrio bacteriovorus (strain ATCC 15356 / DSM 50701 / NCIMB 9529 / HD100)).